A 129-amino-acid chain; its full sequence is Small ribosomal subunit protein uS8 (129 aa).

It belongs to the universal ribosomal protein uS8 family. In terms of assembly, part of the 30S ribosomal subunit.

Functionally, one of the primary rRNA binding proteins, it binds directly to 16S rRNA central domain where it helps coordinate assembly of the platform of the 30S subunit. The sequence is that of Small ribosomal subunit protein uS8 from Thermofilum pendens (strain DSM 2475 / Hrk 5).